Here is a 212-residue protein sequence, read N- to C-terminus: Glycerol-3-phosphate acyltransferase (212 aa).

Transmembrane regions (helical) follow at residues 10 to 30, 90 to 110, 124 to 144, 150 to 170, and 171 to 191; these read FAALLIVLAYLIGCVPFAVVV, GYGLVLIAVFLGHLYPVSLGF, FAVSPWLALATVATWLLVAVV, LAALVAAFLAPVYYFFGGGTI, and WPLNAPTAAALVGVSALLFYR.

The protein belongs to the PlsY family. Probably interacts with PlsX.

Its subcellular location is the cell inner membrane. The enzyme catalyses an acyl phosphate + sn-glycerol 3-phosphate = a 1-acyl-sn-glycero-3-phosphate + phosphate. Its pathway is lipid metabolism; phospholipid metabolism. In terms of biological role, catalyzes the transfer of an acyl group from acyl-phosphate (acyl-PO(4)) to glycerol-3-phosphate (G3P) to form lysophosphatidic acid (LPA). This enzyme utilizes acyl-phosphate as fatty acyl donor, but not acyl-CoA or acyl-ACP. The chain is Glycerol-3-phosphate acyltransferase from Bordetella avium (strain 197N).